Consider the following 98-residue polypeptide: NADH-ubiquinone oxidoreductase chain 4L (98 aa).

Helical transmembrane passes span 1–21 (MVLI…GVLI), 36–56 (MMLS…MFSI), and 61–81 (LILL…LVTI).

This sequence belongs to the complex I subunit 4L family. As to quaternary structure, core subunit of respiratory chain NADH dehydrogenase (Complex I) which is composed of 45 different subunits.

The protein localises to the mitochondrion inner membrane. It carries out the reaction a ubiquinone + NADH + 5 H(+)(in) = a ubiquinol + NAD(+) + 4 H(+)(out). Core subunit of the mitochondrial membrane respiratory chain NADH dehydrogenase (Complex I) which catalyzes electron transfer from NADH through the respiratory chain, using ubiquinone as an electron acceptor. Part of the enzyme membrane arm which is embedded in the lipid bilayer and involved in proton translocation. The polypeptide is NADH-ubiquinone oxidoreductase chain 4L (MT-ND4L) (Metachirus nudicaudatus (Brown four-eyed opossum)).